A 247-amino-acid chain; its full sequence is Protein NipSnap homolog 3A (247 aa).

Lys-48 and Lys-166 each carry N6-acetyllysine.

The protein belongs to the NipSnap family. Interacts with the Salmonella typhimurium virulence protein spiC. Ubiquitous. Highly expressed in liver, kidney and muscle. Expressed at intermediate level in brain, heart, colon, thymus, kidney, small intestine, placenta, lung, leukocytes and spleen.

It is found in the cytoplasm. The protein localises to the cytosol. This Homo sapiens (Human) protein is Protein NipSnap homolog 3A (NIPSNAP3A).